The following is a 284-amino-acid chain: Bifunctional protein FolD (284 aa).

Residues 165 to 167 (GRS) and Ser-190 contribute to the NADP(+) site.

It belongs to the tetrahydrofolate dehydrogenase/cyclohydrolase family. Homodimer.

It carries out the reaction (6R)-5,10-methylene-5,6,7,8-tetrahydrofolate + NADP(+) = (6R)-5,10-methenyltetrahydrofolate + NADPH. The enzyme catalyses (6R)-5,10-methenyltetrahydrofolate + H2O = (6R)-10-formyltetrahydrofolate + H(+). The protein operates within one-carbon metabolism; tetrahydrofolate interconversion. Functionally, catalyzes the oxidation of 5,10-methylenetetrahydrofolate to 5,10-methenyltetrahydrofolate and then the hydrolysis of 5,10-methenyltetrahydrofolate to 10-formyltetrahydrofolate. The sequence is that of Bifunctional protein FolD from Streptococcus agalactiae serotype Ia (strain ATCC 27591 / A909 / CDC SS700).